Consider the following 1142-residue polypeptide: E3 ubiquitin-protein ligase TRIM33 (1142 aa).

Residues M1 to G18 show a composition bias toward gly residues. The interval M1 to G132 is disordered. A necessary for E3 ubiquitin-protein ligase activity and repression of SMAD4 signaling and transcriptional repression region spans residues M1–H163. The segment covering S19–L42 has biased composition (low complexity). A compositionally biased stretch (gly residues) spans R52–D64. The segment covering G65–P99 has biased composition (low complexity). A compositionally biased stretch (pro residues) spans A100–A122. The RING-type zinc-finger motif lies at C141–R201. B box-type zinc fingers lie at residues K228–K275 and Q287–L328. 8 residues coordinate Zn(2+): C233, C236, C257, H261, C292, H295, C315, and H320. Residues C315 to D417 are necessary for oligomerization. The stretch at C315–D417 forms a coiled coil. Residues K345, K350, K497, and K520 each participate in a glycyl lysine isopeptide (Lys-Gly) (interchain with G-Cter in SUMO2) cross-link. Position 531 is an asymmetric dimethylarginine; alternate (R531). Position 531 is an omega-N-methylarginine; alternate (R531). K543 participates in a covalent cross-link: Glycyl lysine isopeptide (Lys-Gly) (interchain with G-Cter in SUMO2). At R551 the chain carries Omega-N-methylarginine. Residue R593 is modified to Asymmetric dimethylarginine. The residue at position 607 (R607) is an Asymmetric dimethylarginine; alternate. R607 bears the Omega-N-methylarginine; alternate mark. Asymmetric dimethylarginine is present on residues R614 and R620. Disordered stretches follow at residues P657–S676, N688–G707, and Y718–S834. Over residues P738–R774 the composition is skewed to low complexity. Basic and acidic residues-rich tracts occupy residues T775–P794 and K808–R817. N6-acetyllysine; alternate occurs at positions 778 and 784. Glycyl lysine isopeptide (Lys-Gly) (interchain with G-Cter in SUMO2); alternate cross-links involve residues K778 and K784. K789 is covalently cross-linked (Glycyl lysine isopeptide (Lys-Gly) (interchain with G-Cter in SUMO2)). Glycyl lysine isopeptide (Lys-Gly) (interchain with G-Cter in SUMO2); alternate cross-links involve residues K791 and K808. Glycyl lysine isopeptide (Lys-Gly) (interchain with G-Cter in SUMO1); alternate cross-links involve residues K791 and K808. K808 carries the N6-acetyllysine; alternate modification. Residue K811 forms a Glycyl lysine isopeptide (Lys-Gly) (interchain with G-Cter in SUMO2) linkage. The residue at position 818 (S818) is a Phosphoserine. A compositionally biased stretch (low complexity) spans L822–S834. Residue T830 is modified to Phosphothreonine. K876 participates in a covalent cross-link: Glycyl lysine isopeptide (Lys-Gly) (interchain with G-Cter in SUMO2). S877 is subject to Phosphoserine. Residues E902–I949 form a PHD-type zinc finger. K966 is modified (N6-acetyllysine). Position 968 is an N6-acetyllysine; alternate (K968). A Glycyl lysine isopeptide (Lys-Gly) (interchain with G-Cter in SUMO2); alternate cross-link involves residue K968. The 124-residue stretch at G972–I1095 folds into the Bromo domain. Residues K1022 and K1058 each participate in a glycyl lysine isopeptide (Lys-Gly) (interchain with G-Cter in SUMO2) cross-link. T1066 is subject to Phosphothreonine. K1072 is covalently cross-linked (Glycyl lysine isopeptide (Lys-Gly) (interchain with G-Cter in SUMO2)). The interval P1103–K1142 is disordered. Acidic residues predominate over residues F1107 to F1124. Residue T1117 is modified to Phosphothreonine. A Phosphoserine modification is found at S1120. K1133 is covalently cross-linked (Glycyl lysine isopeptide (Lys-Gly) (interchain with G-Cter in SUMO2)). Residues K1133 to K1142 show a composition bias toward basic and acidic residues. Residue S1134 is modified to Phosphoserine.

It belongs to the TRIM/RBCC family. In terms of assembly, homooligomer and heterooligomer with TRIM24 and TRIM28 family members. Interacts with SMAD4 in unstimulated cells. Found in a complex with SMAD2 and SMAD3 upon addition of TGF-beta. Interacts with SMAD2 and SMAD3. Interacts with SMAD4 under basal and induced conditions and, upon TGF-beta signaling, with activated SMAD2. Forms a ternary complex with SMAD4 and SMAD2 upon TGF-beta signaling. Post-translationally, sumoylated with SUMO1. In terms of tissue distribution, ubiquitous with high level in testis.

The protein resides in the nucleus. It catalyses the reaction S-ubiquitinyl-[E2 ubiquitin-conjugating enzyme]-L-cysteine + [acceptor protein]-L-lysine = [E2 ubiquitin-conjugating enzyme]-L-cysteine + N(6)-ubiquitinyl-[acceptor protein]-L-lysine.. It participates in protein modification; protein ubiquitination. In terms of biological role, acts as an E3 ubiquitin-protein ligase. Promotes SMAD4 ubiquitination, nuclear exclusion and degradation via the ubiquitin proteasome pathway. May act as a transcriptional repressor. Inhibits the transcriptional response to TGF-beta/BMP signaling cascade. Plays a role in the control of cell proliferation. Its association with SMAD2 and SMAD3 stimulates erythroid differentiation of hematopoietic stem/progenitor. Monoubiquitinates SMAD4 and acts as an inhibitor of SMAD4-dependent TGF-beta/BMP signaling cascade (Monoubiquitination of SMAD4 hampers its ability to form a stable complex with activated SMAD2/3 resulting in inhibition of TGF-beta/BMP signaling cascade). The polypeptide is E3 ubiquitin-protein ligase TRIM33 (Trim33) (Mus musculus (Mouse)).